The chain runs to 94 residues: Conotoxin Qc6.1 (94 aa).

The signal sequence occupies residues 1–22; it reads MKLTCMMIVALLFLTAWTFVTA. The propeptide occupies 23 to 62; it reads VDSKNELENRGGWGQAGGWGKLFPMARDEMKNSEVSKLDN. 3 disulfide bridges follow: Cys66–Cys84, Cys73–Cys88, and Cys83–Cys92.

It belongs to the conotoxin O1 superfamily. Expressed by the venom duct.

The protein localises to the secreted. In Conus quercinus (Oak cone), this protein is Conotoxin Qc6.1.